The chain runs to 174 residues: Glutamyl-tRNA(Gln) amidotransferase subunit F, mitochondrial (174 aa).

This sequence belongs to the GatF family. In terms of assembly, subunit of the heterotrimeric GatFAB amidotransferase (AdT) complex, composed of A, B and F subunits.

The protein resides in the mitochondrion inner membrane. It carries out the reaction L-glutamyl-tRNA(Gln) + L-glutamine + ATP + H2O = L-glutaminyl-tRNA(Gln) + L-glutamate + ADP + phosphate + H(+). Its function is as follows. Allows the formation of correctly charged Gln-tRNA(Gln) through the transamidation of misacylated Glu-tRNA(Gln) in the mitochondria. The reaction takes place in the presence of glutamine and ATP through an activated gamma-phospho-Glu-tRNA(Gln). Required for proper protein synthesis within the mitochondrion. The sequence is that of Glutamyl-tRNA(Gln) amidotransferase subunit F, mitochondrial from Kluyveromyces lactis (strain ATCC 8585 / CBS 2359 / DSM 70799 / NBRC 1267 / NRRL Y-1140 / WM37) (Yeast).